The following is a 157-amino-acid chain: Lipoprotein signal peptidase (157 aa).

4 helical membrane passes run 10–30 (LVFM…KYAI), 38–58 (SLMV…LLSF), 59–79 (LEGG…IFLI), and 84–104 (LFKT…SNVL). Active-site residues include aspartate 114 and aspartate 131. The chain crosses the membrane as a helical span at residues 122–142 (FDFAIFNFADVMIDVGVGVLL).

It belongs to the peptidase A8 family.

It is found in the cell inner membrane. The catalysed reaction is Release of signal peptides from bacterial membrane prolipoproteins. Hydrolyzes -Xaa-Yaa-Zaa-|-(S,diacylglyceryl)Cys-, in which Xaa is hydrophobic (preferably Leu), and Yaa (Ala or Ser) and Zaa (Gly or Ala) have small, neutral side chains.. The protein operates within protein modification; lipoprotein biosynthesis (signal peptide cleavage). This protein specifically catalyzes the removal of signal peptides from prolipoproteins. The polypeptide is Lipoprotein signal peptidase (Helicobacter pylori (strain HPAG1)).